The primary structure comprises 1124 residues: Probable leucine-rich repeat receptor-like protein kinase At2g33170 (1124 aa).

Positions 1-32 are cleaved as a signal peptide; that stretch reads MGWWIFEFKKESKSMFVGVLFLLTLLVWTSES. The Extracellular segment spans residues 33-752; the sequence is LNSDGQFLLE…LKAGSARRGR (720 aa). N-linked (GlcNAc...) asparagine glycans are attached at residues Asn-72, Asn-96, and Asn-131. 26 LRR repeats span residues 86–109, 110–132, 134–156, 158–180, 182–205, 206–228, 230–252, 254–277, 278–300, 302–325, 326–348, 350–371, 374–397, 398–420, 422–444, 446–468, 470–491, 494–516, 518–540, 542–564, 566–588, 590–613, 614–636, 638–661, 663–686, and 687–709; these read VVTSLDLSSMNLSGIVSPSIGGLV, NLVYLNLAYNALTGDIPREIGNC, KLEVMFLNNNQFGGSIPVEINKL, QLRSFNICNNKLSGPLPEEIGDL, NLEELVAYTNNLTGPLPRSLGNLN, KLTTFRAGQNDFSGNIPTEIGKC, NLKLLGLAQNFISGELPKEIGML, KLQEVILWQNKFSGFIPKDIGNLT, SLETLALYGNSLVGPIPSEIGNM, SLKKLYLYQNQLNGTIPKELGKLS, KVMEIDFSENLLSGEIPVELSKI, ELRLLYLFQNKLTGIIPNELSK, NLAKLDLSINSLTGPIPPGFQNLT, SMRQLQLFHNSLSGVIPQGLGLY, PLWVVDFSENQLSGKIPPFICQQ, NLILLNLGSNRIFGNIPPGVLRC, SLLQLRVVGNRLTGQFPTELCK, NLSAIELDQNRFSGPLPPEIGTC, KLQRLHLAANQFSSNLPNEISKL, NLVTFNVSSNSLTGPIPSEIANC, MLQRLDLSRNSFIGSLPPELGSL, QLEILRLSENRFSGNIPFTIGNLT, HLTELQMGGNLFSGSIPPQLGLL, SLQIAMNLSYNDFSGEIPPEIGNL, LLMYLSLNNNHLSGEIPTTFENLS, and SLLGCNFSYNNLTGQLPHTQIFQ. Residue Asn-192 is glycosylated (N-linked (GlcNAc...) asparagine). A glycan (N-linked (GlcNAc...) asparagine) is linked at Asn-275. N-linked (GlcNAc...) asparagine glycosylation occurs at Asn-314. An N-linked (GlcNAc...) asparagine glycan is attached at Asn-395. Residue Asn-494 is glycosylated (N-linked (GlcNAc...) asparagine). Residue Asn-547 is glycosylated (N-linked (GlcNAc...) asparagine). The N-linked (GlcNAc...) asparagine glycan is linked to Asn-611. Residues Asn-644, Asn-684, Asn-692, Asn-697, and Asn-710 are each glycosylated (N-linked (GlcNAc...) asparagine). A helical transmembrane segment spans residues 753 to 773; sequence IIIIVSSVIGGISLLLIAIVV. At 774-1124 the chain is on the cytoplasmic side; that stretch reads HFLRNPVEPT…CSDLPPPAPP (351 aa). Phosphothreonine is present on residues Thr-808 and Thr-816. The region spanning 819–1100 is the Protein kinase domain; sequence FHDSYIVGRG…TMREVVLMLI (282 aa). ATP contacts are provided by residues 825–833 and Lys-847; that span reads VGRGACGTV. Tyr-901 and Tyr-939 each carry phosphotyrosine. The active-site Proton acceptor is the Asp-952. Phosphoserine is present on Ser-986. Tyr-994 and Tyr-1001 each carry phosphotyrosine. Thr-1002 bears the Phosphothreonine mark.

Belongs to the protein kinase superfamily. Ser/Thr protein kinase family.

The protein resides in the membrane. The enzyme catalyses L-seryl-[protein] + ATP = O-phospho-L-seryl-[protein] + ADP + H(+). The catalysed reaction is L-threonyl-[protein] + ATP = O-phospho-L-threonyl-[protein] + ADP + H(+). The sequence is that of Probable leucine-rich repeat receptor-like protein kinase At2g33170 from Arabidopsis thaliana (Mouse-ear cress).